Here is a 598-residue protein sequence, read N- to C-terminus: Trichothecene efflux pump TRI12 (598 aa).

A helical transmembrane segment spans residues isoleucine 42–alanine 62. N-linked (GlcNAc...) asparagine glycosylation occurs at asparagine 79. 2 helical membrane-spanning segments follow: residues proline 109–threonine 129 and leucine 135–isoleucine 155. N-linked (GlcNAc...) asparagine glycosylation occurs at asparagine 161. The next 10 helical transmembrane spans lie at phenylalanine 165 to leucine 185, tryptophan 197 to tyrosine 217, tryptophan 241 to glycine 261, valine 273 to tyrosine 293, phenylalanine 312 to methionine 332, alanine 356 to valine 376, tryptophan 381 to asparagine 401, isoleucine 409 to leucine 429, alanine 442 to isoleucine 462, and alanine 533 to methionine 553. Residues leucine 579–glutamate 598 form a disordered region.

This sequence belongs to the major facilitator superfamily.

It is found in the cell membrane. Functionally, efflux pump that provides the dual role of trichothecene export and self-protection by allowing the fungus to evade the harmful effect of its own trichothecene production. In Fusarium sporotrichioides, this protein is Trichothecene efflux pump TRI12.